A 224-amino-acid polypeptide reads, in one-letter code: Putative tyrosine-protein phosphatase OCA6 (224 aa).

Threonine 2 bears the Phosphothreonine mark. The 163-residue stretch at glutamine 8–leucine 170 folds into the Tyrosine-protein phosphatase domain. Cysteine 114 (phosphocysteine intermediate) is an active-site residue.

Belongs to the protein-tyrosine phosphatase family.

Its subcellular location is the cytoplasm. It carries out the reaction O-phospho-L-tyrosyl-[protein] + H2O = L-tyrosyl-[protein] + phosphate. Its function is as follows. Required for replication of Brome mosaic virus (BMV). This Saccharomyces cerevisiae (strain ATCC 204508 / S288c) (Baker's yeast) protein is Putative tyrosine-protein phosphatase OCA6 (OCA6).